The chain runs to 359 residues: Peptide chain release factor 1 (359 aa).

Gln236 bears the N5-methylglutamine mark.

The protein belongs to the prokaryotic/mitochondrial release factor family. In terms of processing, methylated by PrmC. Methylation increases the termination efficiency of RF1.

Its subcellular location is the cytoplasm. Peptide chain release factor 1 directs the termination of translation in response to the peptide chain termination codons UAG and UAA. This chain is Peptide chain release factor 1, found in Streptococcus pyogenes serotype M3 (strain ATCC BAA-595 / MGAS315).